The chain runs to 251 residues: Large ribosomal subunit protein uL16m (251 aa).

The N-terminal 29 residues, 1–29 (MWRLLTRVPAPLLRMHFSDSWAALPTSAG), are a transit peptide targeting the mitochondrion.

Belongs to the universal ribosomal protein uL16 family. Component of the mitochondrial ribosome large subunit (39S) which comprises a 16S rRNA and about 50 distinct proteins.

The protein localises to the mitochondrion. The chain is Large ribosomal subunit protein uL16m (Mrpl16) from Mus musculus (Mouse).